A 391-amino-acid polypeptide reads, in one-letter code: NADH-quinone oxidoreductase subunit D (391 aa).

This sequence belongs to the complex I 49 kDa subunit family. NDH-1 is composed of 14 different subunits. Subunits NuoB, C, D, E, F, and G constitute the peripheral sector of the complex.

The protein localises to the cell inner membrane. It catalyses the reaction a quinone + NADH + 5 H(+)(in) = a quinol + NAD(+) + 4 H(+)(out). NDH-1 shuttles electrons from NADH, via FMN and iron-sulfur (Fe-S) centers, to quinones in the respiratory chain. The immediate electron acceptor for the enzyme in this species is believed to be ubiquinone. Couples the redox reaction to proton translocation (for every two electrons transferred, four hydrogen ions are translocated across the cytoplasmic membrane), and thus conserves the redox energy in a proton gradient. This chain is NADH-quinone oxidoreductase subunit D, found in Rickettsia felis (strain ATCC VR-1525 / URRWXCal2) (Rickettsia azadi).